We begin with the raw amino-acid sequence, 341 residues long: Cysteine-rich repeat secretory protein 1 (341 aa).

Residues Met1 to Ala25 form the signal peptide. 2 consecutive Gnk2-homologous domains span residues Thr28–Ile131 and Asp136–Leu245. 4 disulfides stabilise this stretch: Cys85–Cys94, Cys97–Cys122, Cys199–Cys208, and Cys211–Cys236. Positions Pro247–Gln262 are enriched in pro residues. Residues Pro247 to Asp274 form a disordered region.

Belongs to the cysteine-rich repeat secretory protein family.

The protein resides in the secreted. In Arabidopsis thaliana (Mouse-ear cress), this protein is Cysteine-rich repeat secretory protein 1 (CRRSP1).